We begin with the raw amino-acid sequence, 350 residues long: Probable deoxyhypusine synthase (350 aa).

NAD(+) is bound by residues 96–100, 122–124, Glu-128, and Asp-229; these read SNLIS and TAG. 127-128 lines the spermidine pocket; that stretch reads EE. Asp-234 contacts spermidine. Gly-276 provides a ligand contact to NAD(+). His-281 serves as a coordination point for spermidine. 301 to 302 contributes to the NAD(+) binding site; the sequence is SA. Spermidine contacts are provided by residues 307 to 309 and 316 to 322; these read GSD and EAVSWGK. Catalysis depends on Lys-322, which acts as the Nucleophile. 335–336 serves as a coordination point for NAD(+); that stretch reads EV.

This sequence belongs to the deoxyhypusine synthase family. The cofactor is NAD(+).

The enzyme catalyses [eIF5A protein]-L-lysine + spermidine = [eIF5A protein]-deoxyhypusine + propane-1,3-diamine. Its pathway is protein modification; eIF5A hypusination. In terms of biological role, catalyzes the NAD-dependent oxidative cleavage of spermidine and the subsequent transfer of the butylamine moiety of spermidine to the epsilon-amino group of a specific lysine residue of the eIF-5A precursor protein to form the intermediate deoxyhypusine residue. The protein is Probable deoxyhypusine synthase of Schizosaccharomyces pombe (strain 972 / ATCC 24843) (Fission yeast).